The following is a 130-amino-acid chain: Small ribosomal subunit protein uS8z/uS8w (130 aa).

It belongs to the universal ribosomal protein uS8 family.

Its subcellular location is the cytoplasm. This chain is Small ribosomal subunit protein uS8z/uS8w (RPS15AA), found in Arabidopsis thaliana (Mouse-ear cress).